Consider the following 439-residue polypeptide: MVYLRYFKGLILSDAYAPGLKWSDELKAYSALAFKYRDVRKYFLEKEIEVEENVIDSLPFPLIKDKIELRDYQAEAVKAWLKEKRGIIVLPTGAGKTQVALKIVSIMKVATLIVVPTIDLITQWKERINKYLDFDPGIIGGGEDSLKGITVITYDSAYTRAEELGNKFPLLIFDEVHHLPSEGYSIMAQLFASPYRLGLTATPERDDGKHELYPILVGPIVYRKSVEELAGKYIAKYKIKKLYVSLTNEEKKRYDGLRKKLKDFLSSRGLKLQNLDDFHRLVKLAAKDKEAREALLAWHESLNIAVNSQSKIEKLREILQEYKNEKIIVFTRDTQMAYRISKTFLIPVVTYKTDKDEREEILQKFRDGEYRVIVASTVFDEGVDVPDATLAIVMGGYGTKRQFLQRLGRILRKKDKEALLIEIVTKGTADYRLSRRRRE.

The interval 1 to 54 is DRD domain; sequence MVYLRYFKGLILSDAYAPGLKWSDELKAYSALAFKYRDVRKYFLEKEIEVEENV. Positions 77-221 constitute a Helicase ATP-binding domain; that stretch reads VKAWLKEKRG…LYPILVGPIV (145 aa). ATP is bound by residues 90-97 and R127; that span reads LPTGAGKT. The DEAH box motif lies at 174 to 177; sequence DEVH. The RED motif signature appears at 205 to 207; sequence RDD. The segment at 227-234 is flexible hinge region; it reads EELAGKYI. The interval 248–307 is thM region; the sequence is NEEKKRYDGLRKKLKDFLSSRGLKLQNLDDFHRLVKLAAKDKEAREALLAWHESLNIAVN. Residues 311–439 enclose the Helicase C-terminal domain; sequence KIEKLREILQ…DYRLSRRRRE (129 aa).

It belongs to the helicase family. RAD25/XPB subfamily. Forms a heterodimer with Bax1.

It carries out the reaction Couples ATP hydrolysis with the unwinding of duplex DNA by translocating in the 3'-5' direction.. The catalysed reaction is ATP + H2O = ADP + phosphate + H(+). Functionally, ATP-dependent DNA translocase which moves along double-stranded DNA (dsDNA) in a 3'-5' direction, unwinding the DNA. The ThM domain grips the resulting 3'-ssDNA tail and functions as a wedge (particularly Phe-278), breaking dsDNA base pairs, probably using the energy from ATP hydrolysis to move along dsDNA. A DNA-dependent ATPase; double-stranded DNA (dsDNA) stimulates the activity more than single-stranded DNA (ssDNA), while Bax1 stimulates ATPase more. In an in vitro assay had no detectable helicase activity. Binds ssDNA better than dsDNA. Has very low ATPase activity that is stimulated by Bax1; dsDNA, Y-form DNA and a DNA substrate with a 6 base pair (bp) bubble in the center stimulate the XPB2-Bax1 ATPase activity about 10- 20-fold more than the absence of DNA. In an XPB2-Bax1-bubble DNA crystal (12 bp of dsDNA, a 6 base bubble and 6 bp of dsDNA) the short 6 bp arm is unwound. The 2 helicase and the ThM domains of XPB2 with the NTD and CRD domains of Bax1 encircle the DNA, forming a tunnel where the 12 bp dsDNA and the ds-ssDNA junction are located. The ThM domain is wedged between the ssDNA tails, with the 5' ssDNA contacting Bax1 and the 3' ssDNA in a channel in XPB2. Bax1 increases the affinity of XPB2 for forked DNA. In Sulfurisphaera tokodaii (strain DSM 16993 / JCM 10545 / NBRC 100140 / 7) (Sulfolobus tokodaii), this protein is DNA 3'-5' translocase XPB2.